A 1187-amino-acid polypeptide reads, in one-letter code: ATP-dependent DNA helicase MER3 (1187 aa).

Residues 1–41 (MKTKFDRLGTGKRSRPSPNNIDFNDQSATFKRNKKNSRQPS) form a disordered region. Polar residues predominate over residues 16 to 30 (PSPNNIDFNDQSATF). The Helicase ATP-binding domain maps to 148 to 322 (PSIYESNENC…WLKTNNELPA (175 aa)). Residue 161–168 (SPTGSGKT) coordinates ATP. The DEIH box signature appears at 268–271 (DEIH). In terms of domain architecture, Helicase C-terminal spans 360 to 542 (KLIEIIEKHA…NLIEHLAAET (183 aa)). Residues 616–922 (STAYGNAMTR…PKLEKIEFSI (307 aa)) form the SEC63 domain. Residues 1039-1054 (CFHSCKDKTQCRHLCC) form a C4-type zinc finger. Residues 1146-1187 (NCPEIIPIDLESSDSYSSNTAASSISDPNGDLDFLGSDIEFE) form a disordered region. The span at 1158 to 1171 (SDSYSSNTAASSIS) shows a compositional bias: low complexity.

It belongs to the helicase family. SKI2 subfamily. In terms of assembly, oligomerizes. It depends on a divalent metal cation as a cofactor. Zn(2+) serves as cofactor.

The protein localises to the nucleus. It catalyses the reaction Couples ATP hydrolysis with the unwinding of duplex DNA by translocating in the 3'-5' direction.. It carries out the reaction ATP + H2O = ADP + phosphate + H(+). In terms of biological role, DNA-dependent ATPase and 3'-5' DNA helicase. Required in the control of double strand break transition and crossover during meiosis. ATPase is slightly better stimulated by single-stranded (ss) than double-stranded (ds)DNA. Unwinds Holliday junction (HJ) DNA to Y-DNA and to ssDNA. Efficient unwinding requires 6 nucleotides of 3'-ssDNA; seems to initiate unwinding from blunt ends when they open slightly. Binds HJ, dsDNA, ssDNA and 3'- and 5-overhang DNA. This is ATP-dependent DNA helicase MER3 from Saccharomyces cerevisiae (strain ATCC 204508 / S288c) (Baker's yeast).